The chain runs to 509 residues: MFS transporter fsdG (509 aa).

N-linked (GlcNAc...) asparagine glycosylation is found at N8 and N26. Transmembrane regions (helical) follow at residues 63–83 (FLIH…ATTM), 103–123 (IALT…VTSP), 139–159 (IFFL…MFIA), and 162–182 (FLAG…IADF). N-linked (GlcNAc...) asparagine glycosylation occurs at N189. A run of 4 helical transmembrane segments spans residues 195–215 (LFAL…GFVA), 222–242 (WTFR…CIFL), 298–318 (LIFL…FGLI), and 341–361 (GLSY…FNFI). A glycan (N-linked (GlcNAc...) asparagine) is linked at N367. Transmembrane regions (helical) follow at residues 380 to 400 (YLPL…WYGW), 408 to 428 (WVVP…IIMP), 442 to 462 (AASV…FLPL), and 474 to 494 (GWGN…PAIF).

The protein belongs to the major facilitator superfamily.

The protein localises to the cell membrane. Its function is as follows. Efflux pump that might be required for efficient secretion of fusaridione A or other secondary metabolies produced by the fusaridione A gene cluster. The protein is MFS transporter fsdG of Fusarium heterosporum.